Here is a 664-residue protein sequence, read N- to C-terminus: Degenerin del-1 (664 aa).

Residues 1–67 (MARKYIDILK…IFTTSLYWVR (67 aa)) lie on the Cytoplasmic side of the membrane. The chain crosses the membrane as a helical span at residues 68 to 88 (FLWVVVSLVCICLCMYSFSHV). The Extracellular portion of the chain corresponds to 89 to 607 (KDKYDRKEKI…WFNLMADMGG (519 aa)). N-linked (GlcNAc...) asparagine glycans are attached at residues Asn241, Asn300, Asn394, Asn508, and Asn562. The chain crosses the membrane as a helical span at residues 608–628 (QAGLFLGASIMSVIEFLFFAV). At 629 to 664 (RTLGIACKPRRWRQKTELLRAEELNDAEKGVSTNNN) the chain is on the cytoplasmic side.

The protein belongs to the amiloride-sensitive sodium channel (TC 1.A.6) family.

Its subcellular location is the membrane. Its function is as follows. Probable sodium channel subunit. This Caenorhabditis elegans protein is Degenerin del-1 (del-1).